Consider the following 218-residue polypeptide: Transcription initiation factor TFIID subunit 10 (218 aa).

2 stretches are compositionally biased toward low complexity: residues 1–21 and 29–39; these read MSCS…ASAP and APAALPSSTAA. The segment at 1 to 85 is disordered; it reads MSCSGSGADP…GAAPVSAGGA (85 aa). Position 2 is an N-acetylserine (serine 2). Serine 44 is modified (phosphoserine). The residue at position 48 (threonine 48) is a Phosphothreonine. The span at 48-62 shows a compositional bias: gly residues; it reads TAGGPGAGAAAGGTG. The [KR]-[STA]-K motif motif lies at 187–189; that stretch reads KSK. Lysine 189 carries the post-translational modification Allysine; alternate. Lysine 189 carries the N6,N6,N6-trimethyllysine; alternate modification.

The protein belongs to the TAF10 family. In terms of assembly, component of the TFIID basal transcription factor complex, composed of TATA-box-binding protein TBP, and a number of TBP-associated factors (TAFs), including TAF1, TAF2, TAF3, TAF4, TAF5, TAF6, TAF7, TAF8, TAF9, TAF10, TAF11, TAF12 and TAF13. Component of the TATA-binding protein-free TAF complex (TFTC), the PCAF histone acetylase complex and the STAGA transcription coactivator-HAT complex. The PCAF complex consists at least of TADA2L/ADA2, TADA3L/ADA3, SUPT3H, TAF5L TAF6L, TAF9, TAF10, TAF12 and TRRAP. The TFTC-HAT complex consists at least of TAF5L, TAF6L, TADA3L, SUPT3H, TAF2, TAF4, TAF5, GCN5L2/GCN5, TAF10 and TRRAP. The STAGA transcription coactivator-HAT complex consists at least of SUPT3H, GCN5L2, TAF5L, TAF6L, SUPT7L, TADA3L, TAD1L, TAF10, TAF12, TRRAP and TAF9. The STAGA core complex is associated with a subcomplex required for histone deubiquitination composed of ATXN7L3, ENY2 and USP22. Interacts with TAF3. Interacts with LOXL2. Interacts with TAF12 isoform TAFII20; the interaction is direct. Monomethylated at Lys-189 by SETD7, leading to increased affinity for RNA polymerase II. In terms of processing, lysine deamination at Lys-189 to form allysine is mediated by LOXL2. Allysine formation by LOXL2 results in release of TAF10 from promoters, leading to inhibition of TFIID-dependent transcription.

It is found in the nucleus. The TFIID basal transcription factor complex plays a major role in the initiation of RNA polymerase II (Pol II)-dependent transcription. TFIID recognizes and binds promoters with or without a TATA box via its subunit TBP, a TATA-box-binding protein, and promotes assembly of the pre-initiation complex (PIC). The TFIID complex consists of TBP and TBP-associated factors (TAFs), including TAF1, TAF2, TAF3, TAF4, TAF5, TAF6, TAF7, TAF8, TAF9, TAF10, TAF11, TAF12 and TAF13. TAF10 is also component of the PCAF histone acetylase complex, the TATA-binding protein-free TAF complex (TFTC) and the STAGA transcription coactivator-HAT complex. May regulate cyclin E expression. The chain is Transcription initiation factor TFIID subunit 10 (TAF10) from Homo sapiens (Human).